A 211-amino-acid polypeptide reads, in one-letter code: N-(5'-phosphoribosyl)anthranilate isomerase (211 aa).

Belongs to the TrpF family.

The catalysed reaction is N-(5-phospho-beta-D-ribosyl)anthranilate = 1-(2-carboxyphenylamino)-1-deoxy-D-ribulose 5-phosphate. It functions in the pathway amino-acid biosynthesis; L-tryptophan biosynthesis; L-tryptophan from chorismate: step 3/5. The polypeptide is N-(5'-phosphoribosyl)anthranilate isomerase (Chromohalobacter salexigens (strain ATCC BAA-138 / DSM 3043 / CIP 106854 / NCIMB 13768 / 1H11)).